We begin with the raw amino-acid sequence, 420 residues long: Melatonin receptor type 1C (420 aa).

Over 1-34 the chain is Extracellular; sequence MMEVNSTCLDCRTPGTIRTEQDAQDSASQGLTSA. Asn-5 carries an N-linked (GlcNAc...) asparagine glycan. A helical transmembrane segment spans residues 35-55; that stretch reads LAVVLIFTIVVDVLGNILVIL. Residues 56–73 lie on the Cytoplasmic side of the membrane; the sequence is SVLRNKKLQNAGNLFVVS. A helical transmembrane segment spans residues 74 to 94; that stretch reads LSIADLVVAVYPYPVILIAIF. Residues 95 to 106 lie on the Extracellular side of the membrane; sequence QNGWTLGNIHCQ. A disulfide bridge links Cys-105 with Cys-182. The helical transmembrane segment at 107 to 127 threads the bilayer; it reads ISGFLMGLSVIGSVFNITAIA. Over 128–152 the chain is Cytoplasmic; it reads INRYCYICHSLRYDKLYNQRSTWCY. Residues 153-173 form a helical membrane-spanning segment; that stretch reads LGLTWILTIIAIVPNFFVGSL. Topologically, residues 174-192 are extracellular; sequence QYDPRIFSCTFAQTVSSSY. A helical membrane pass occupies residues 193 to 213; that stretch reads TITVVVVHFIVPLSVVTFCYL. Residues 214 to 245 lie on the Cytoplasmic side of the membrane; that stretch reads RIWVLVIQVKHRVRQDFKQKLTQTDLRNFLTM. A helical transmembrane segment spans residues 246 to 266; it reads FVVFVLFAVCWAPLNFIGLAV. Residues 267 to 279 are Extracellular-facing; that stretch reads AINPFHVAPKIPE. A helical transmembrane segment spans residues 280–303; the sequence is WLFVLSYFMAYFNSCLNAVIYGVL. Residues 304–420 lie on the Cytoplasmic side of the membrane; that stretch reads NQNFRKEYKR…ELCKDGISQR (117 aa).

It belongs to the G-protein coupled receptor 1 family. As to expression, moderately expressed in dermal melanophores.

The protein localises to the cell membrane. High affinity receptor for melatonin. Likely to mediate the potent effects of melatonin on pigment aggregation in melanophores. The activity of this receptor is mediated by pertussis toxin sensitive G proteins that inhibit adenylate cyclase activity. The chain is Melatonin receptor type 1C (mtnr1c) from Xenopus laevis (African clawed frog).